The chain runs to 262 residues: MIEDLHVHSTMSDGSDTFEQVLEQAAQRGVERLAFTNHDTTAGLTAARELGERLGVQVVGGIEVSAYDFERGRKVHILGLGVEEGAPALAALCGSTLERRHANSLWQLDRLVEAGYEVDVERALELGRASTCLYKQHLMAALTSEPYPSAAYRTLYRSLFKNGGICDRDIDYVDARDAVRVVVEDGGLAVLAHPGQLDSYDLLPDLVECGLGGIERFHPDHTLADHARCAELAVRYRLVCTGGSDYHGKFGRVPHVGFRVPA.

Residues His-6, His-8, Asp-13, His-38, Glu-63, His-76, His-193, Asp-245, and His-247 each coordinate Mn(2+).

The protein belongs to the PHP family. The cofactor is Mn(2+).

It carries out the reaction alpha-D-ribose 1,2-cyclic phosphate 5-phosphate + H2O = D-ribose 2,5-bisphosphate + H(+). It catalyses the reaction D-ribose 2,5-bisphosphate + H2O = D-ribose 5-phosphate + phosphate. Its function is as follows. Involved in degradation of methylphosphonate. Catalyzes the hydrolysis of the phosphate ester at carbon-1 of 5-phospho-D-ribose 1,2-cyclic phosphate to form ribose 2,5-bisphosphate. This intermediate is then hydrolyzed to ribose-5-phosphate and inorganic phosphate. The polypeptide is Phosphoribosyl 1,2-cyclic phosphate 1,2-diphosphodiesterase (Eggerthella lenta (strain ATCC 25559 / DSM 2243 / CCUG 17323 / JCM 9979 / KCTC 3265 / NCTC 11813 / VPI 0255 / 1899 B) (Eubacterium lentum)).